A 77-amino-acid polypeptide reads, in one-letter code: NAD(P)H-quinone oxidoreductase subunit L (77 aa).

2 helical membrane-spanning segments follow: residues 12–32 and 47–67; these read FVAY…ILFY and LGVY…SPFL.

The protein belongs to the complex I NdhL subunit family. As to quaternary structure, NDH-1 can be composed of about 15 different subunits; different subcomplexes with different compositions have been identified which probably have different functions.

It is found in the cellular thylakoid membrane. It carries out the reaction a plastoquinone + NADH + (n+1) H(+)(in) = a plastoquinol + NAD(+) + n H(+)(out). The enzyme catalyses a plastoquinone + NADPH + (n+1) H(+)(in) = a plastoquinol + NADP(+) + n H(+)(out). Its function is as follows. NDH-1 shuttles electrons from an unknown electron donor, via FMN and iron-sulfur (Fe-S) centers, to quinones in the respiratory and/or the photosynthetic chain. The immediate electron acceptor for the enzyme in this species is believed to be plastoquinone. Couples the redox reaction to proton translocation, and thus conserves the redox energy in a proton gradient. Cyanobacterial NDH-1 also plays a role in inorganic carbon-concentration. The chain is NAD(P)H-quinone oxidoreductase subunit L from Prochlorococcus marinus (strain MIT 9515).